We begin with the raw amino-acid sequence, 336 residues long: Pyridoxal 5'-phosphate synthase subunit PdxS (336 aa).

Position 33 (Asp-33) interacts with D-ribose 5-phosphate. The active-site Schiff-base intermediate with D-ribose 5-phosphate is the Lys-90. D-ribose 5-phosphate is bound at residue Gly-162. Arg-174 lines the D-glyceraldehyde 3-phosphate pocket. Residues Gly-260 and 281 to 282 (GS) contribute to the D-ribose 5-phosphate site.

It belongs to the PdxS/SNZ family. As to quaternary structure, in the presence of PdxT, forms a dodecamer of heterodimers.

It catalyses the reaction aldehydo-D-ribose 5-phosphate + D-glyceraldehyde 3-phosphate + L-glutamine = pyridoxal 5'-phosphate + L-glutamate + phosphate + 3 H2O + H(+). It participates in cofactor biosynthesis; pyridoxal 5'-phosphate biosynthesis. In terms of biological role, catalyzes the formation of pyridoxal 5'-phosphate from ribose 5-phosphate (RBP), glyceraldehyde 3-phosphate (G3P) and ammonia. The ammonia is provided by the PdxT subunit. Can also use ribulose 5-phosphate and dihydroxyacetone phosphate as substrates, resulting from enzyme-catalyzed isomerization of RBP and G3P, respectively. This chain is Pyridoxal 5'-phosphate synthase subunit PdxS, found in Picrophilus torridus (strain ATCC 700027 / DSM 9790 / JCM 10055 / NBRC 100828 / KAW 2/3).